The sequence spans 33 residues: Photosystem II reaction center protein T (33 aa).

A helical membrane pass occupies residues 3 to 23 (ALVYTFLLVSTLGIIFFAIFF).

Belongs to the PsbT family. In terms of assembly, PSII is composed of 1 copy each of membrane proteins PsbA, PsbB, PsbC, PsbD, PsbE, PsbF, PsbH, PsbI, PsbJ, PsbK, PsbL, PsbM, PsbT, PsbY, PsbZ, Psb30/Ycf12, at least 3 peripheral proteins of the oxygen-evolving complex and a large number of cofactors. It forms dimeric complexes.

The protein resides in the plastid. Its subcellular location is the chloroplast thylakoid membrane. Its function is as follows. Found at the monomer-monomer interface of the photosystem II (PS II) dimer, plays a role in assembly and dimerization of PSII. PSII is a light-driven water plastoquinone oxidoreductase, using light energy to abstract electrons from H(2)O, generating a proton gradient subsequently used for ATP formation. The polypeptide is Photosystem II reaction center protein T (Arabidopsis thaliana (Mouse-ear cress)).